Here is a 185-residue protein sequence, read N- to C-terminus: ATP synthase subunit b 2 (185 aa).

The tract at residues 1–23 is disordered; it reads MAEGHGDAKGATAHTAADGGHKA. The span at 9-18 shows a compositional bias: low complexity; that stretch reads KGATAHTAAD. Residues 32–51 traverse the membrane as a helical segment; that stretch reads TFASQLVSLTIAFVALYLIV.

This sequence belongs to the ATPase B chain family. As to quaternary structure, F-type ATPases have 2 components, F(1) - the catalytic core - and F(0) - the membrane proton channel. F(1) has five subunits: alpha(3), beta(3), gamma(1), delta(1), epsilon(1). F(0) has three main subunits: a(1), b(2) and c(10-14). The alpha and beta chains form an alternating ring which encloses part of the gamma chain. F(1) is attached to F(0) by a central stalk formed by the gamma and epsilon chains, while a peripheral stalk is formed by the delta and b chains.

The protein resides in the cell inner membrane. Its function is as follows. F(1)F(0) ATP synthase produces ATP from ADP in the presence of a proton or sodium gradient. F-type ATPases consist of two structural domains, F(1) containing the extramembraneous catalytic core and F(0) containing the membrane proton channel, linked together by a central stalk and a peripheral stalk. During catalysis, ATP synthesis in the catalytic domain of F(1) is coupled via a rotary mechanism of the central stalk subunits to proton translocation. In terms of biological role, component of the F(0) channel, it forms part of the peripheral stalk, linking F(1) to F(0). The b'-subunit is a diverged and duplicated form of b found in plants and photosynthetic bacteria. The polypeptide is ATP synthase subunit b 2 (atpF2) (Rhodopseudomonas palustris (strain HaA2)).